The following is a 372-amino-acid chain: Cuticle collagen dpy-10 (372 aa).

A signal peptide spans 1-45; sequence MKNNAKEDYRTFSLTTNYSRQMIYRCVTGLQIGFSLFSFIIVCVA. Triple-helical region stretches follow at residues 144–173, 195–251, and 259–324; these read GPPGPRGSSGTPGKPGLPGNAGKPGMPGTT, GPPG…KGPT, and GPPG…PGVC. The tract at residues 144–372 is disordered; it reads GPPGPRGSSG…RAGYQGYGRK (229 aa). Residues 185–196 are compositionally biased toward pro residues; sequence EPPPCRPCPKGP. The segment covering 197–208 has biased composition (low complexity); it reads PGIKGWPGFPGD. Composition is skewed to gly residues over residues 237 to 246 and 283 to 292; these read GYRGGPGAPG and GLTGGQGERG. Residues 293-303 show a composition bias toward low complexity; sequence WPGVSGESGEP. Positions 353-363 are enriched in gly residues; sequence GYGGSRGGGDR.

The protein belongs to the cuticular collagen family. As to quaternary structure, collagen polypeptide chains are complexed within the cuticle by disulfide bonds and other types of covalent cross-links.

Functionally, nematode cuticles are composed largely of collagen-like proteins. The cuticle functions both as an exoskeleton and as a barrier to protect the worm from its environment. This Caenorhabditis elegans protein is Cuticle collagen dpy-10 (dpy-10).